A 138-amino-acid chain; its full sequence is Phosphoribosyl-AMP cyclohydrolase (138 aa).

Asp-84 serves as a coordination point for Mg(2+). Cys-85 lines the Zn(2+) pocket. Residues Asp-86 and Asp-88 each contribute to the Mg(2+) site. Zn(2+) is bound by residues Cys-102 and Cys-109.

Belongs to the PRA-CH family. In terms of assembly, homodimer. It depends on Mg(2+) as a cofactor. Zn(2+) is required as a cofactor.

The protein resides in the cytoplasm. The enzyme catalyses 1-(5-phospho-beta-D-ribosyl)-5'-AMP + H2O = 1-(5-phospho-beta-D-ribosyl)-5-[(5-phospho-beta-D-ribosylamino)methylideneamino]imidazole-4-carboxamide. It participates in amino-acid biosynthesis; L-histidine biosynthesis; L-histidine from 5-phospho-alpha-D-ribose 1-diphosphate: step 3/9. In terms of biological role, catalyzes the hydrolysis of the adenine ring of phosphoribosyl-AMP. This is Phosphoribosyl-AMP cyclohydrolase from Burkholderia ambifaria (strain ATCC BAA-244 / DSM 16087 / CCUG 44356 / LMG 19182 / AMMD) (Burkholderia cepacia (strain AMMD)).